A 395-amino-acid polypeptide reads, in one-letter code: Lipoyl synthase, mitochondrial (395 aa).

A mitochondrion-targeting transit peptide spans 1-14 (MISLRSISRSPAVQ). Residues Cys-112, Cys-117, Cys-123, Cys-142, Cys-146, Cys-149, and Ser-357 each contribute to the [4Fe-4S] cluster site. Positions 127–346 (KKSEATATIM…RDTALQMGFL (220 aa)) constitute a Radical SAM core domain.

Belongs to the radical SAM superfamily. Lipoyl synthase family. [4Fe-4S] cluster serves as cofactor.

Its subcellular location is the mitochondrion. It carries out the reaction [[Fe-S] cluster scaffold protein carrying a second [4Fe-4S](2+) cluster] + N(6)-octanoyl-L-lysyl-[protein] + 2 oxidized [2Fe-2S]-[ferredoxin] + 2 S-adenosyl-L-methionine + 4 H(+) = [[Fe-S] cluster scaffold protein] + N(6)-[(R)-dihydrolipoyl]-L-lysyl-[protein] + 4 Fe(3+) + 2 hydrogen sulfide + 2 5'-deoxyadenosine + 2 L-methionine + 2 reduced [2Fe-2S]-[ferredoxin]. The protein operates within protein modification; protein lipoylation via endogenous pathway; protein N(6)-(lipoyl)lysine from octanoyl-[acyl-carrier-protein]: step 2/2. Its function is as follows. Catalyzes the radical-mediated insertion of two sulfur atoms into the C-6 and C-8 positions of the octanoyl moiety bound to the lipoyl domains of lipoate-dependent enzymes, thereby converting the octanoylated domains into lipoylated derivatives. This chain is Lipoyl synthase, mitochondrial, found in Debaryomyces hansenii (strain ATCC 36239 / CBS 767 / BCRC 21394 / JCM 1990 / NBRC 0083 / IGC 2968) (Yeast).